An 89-amino-acid polypeptide reads, in one-letter code: Small ribosomal subunit protein bS16 (89 aa).

The protein belongs to the bacterial ribosomal protein bS16 family.

The sequence is that of Small ribosomal subunit protein bS16 from Psychrobacter arcticus (strain DSM 17307 / VKM B-2377 / 273-4).